The sequence spans 1030 residues: Semaphorin-6A (1030 aa).

Residues 1-18 (MRSEALLLYFTLLHFAGA) form the signal peptide. The Extracellular portion of the chain corresponds to 19-649 (GFPEDSEPIS…KGHDQLVPVT (631 aa)). The region spanning 24–512 (SEPISISHGN…FSTCVIKVPL (489 aa)) is the Sema domain. Residues N33, N49, and N65 are each glycosylated (N-linked (GlcNAc...) asparagine). 4 disulfide bridges follow: C107–C117, C135–C144, C258–C369, and C283–C328. N282 carries an N-linked (GlcNAc...) asparagine glycan. N434 and N461 each carry an N-linked (GlcNAc...) asparagine glycan. Cystine bridges form between C477–C506, C515–C533, C521–C568, and C525–C542. The helical transmembrane segment at 650–670 (LLAIAVILAFVMGAVFSGITV) threads the bilayer. The Cytoplasmic segment spans residues 671 to 1030 (YCVCDHRRKD…TSMKPNDACT (360 aa)). Phosphoserine is present on S698. Disordered stretches follow at residues 754 to 778 (ALPT…REWE), 860 to 897 (SSKS…SLSQ), and 912 to 1030 (YGVD…DACT). Positions 920–936 (YPTNSLTRSHQATTLKR) are enriched in polar residues. Residues 937–952 (NNTNSSNSSHLSRNQS) show a composition bias toward low complexity. Phosphoserine is present on S952. Polar residues-rich tracts occupy residues 970–997 (QVHS…SLTR) and 1018–1030 (PLST…DACT).

It belongs to the semaphorin family. Active as a homodimer or oligomer. The SEMA6A homodimer interacts with a PLXNA2 homodimer, giving rise to a heterotetramer. Interacts with EVL. As to quaternary structure, (Microbial infection) Interacts with P.sordellii toxin TcsL; semaphorins SEMA6A and SEMA6B constitute the major host receptors for TcsL in the vascular endothelium.

Its subcellular location is the cell membrane. Its function is as follows. Cell surface receptor for PLXNA2 that plays an important role in cell-cell signaling. Required for normal granule cell migration in the developing cerebellum. Promotes reorganization of the actin cytoskeleton and plays an important role in axon guidance in the developing central nervous system. Can act as repulsive axon guidance cue. Has repulsive action towards migrating granular neurons. May play a role in channeling sympathetic axons into the sympathetic chains and controlling the temporal sequence of sympathetic target innervation. Functionally, (Microbial infection) Acts as a receptor for P.sordellii toxin TcsL in the in the vascular endothelium. This is Semaphorin-6A (SEMA6A) from Homo sapiens (Human).